The sequence spans 292 residues: Protein sarah (292 aa).

A compositionally biased stretch (low complexity) spans 1-51 (MSDAAKSNNNASADAPDPTTPDATGEADAANAATPTTPRGNHNNNNSANGR). The segment at 1-111 (MSDAAKSNNN…TEPEVDADSF (111 aa)) is disordered. 3 positions are modified to phosphoserine: serine 67, serine 72, and serine 100. A compositionally biased stretch (acidic residues) spans 98–111 (VDSDTEPEVDADSF). Threonine 102 and threonine 196 each carry phosphothreonine. Serine 215 and serine 219 each carry phosphoserine. Threonine 246 bears the Phosphothreonine mark.

The protein belongs to the RCAN family. As to quaternary structure, interacts with Pp2B-14D, CanA-14F and CanB2. Phosphorylation at Ser-215 and Ser-219 is essential for calcineurin activation and completion of female meiosis. Sgg is required for phosphorylation of Ser-215 in activated eggs. Ser-100, Thr-102 and Ser-219 are highly phosphorylated in both ovaries and activated eggs; however, phosphorylation at Ser-100 or Thr-102 is not required for sra function in completion of female meiosis. As to expression, expressed in central nervous system of the third instar larvae, with a relatively intense signal in the brain and weak signals in the ventral ganglion. Relatively low, but ubiquitous expression level is observed in leg and wing imaginal disks, no signal is detected in the eye-antennal disks. Expressed in all neurons in the adult brain.

Functionally, required for elongation of meiosis I spindle. Critical for ovulation, meiotic progression in oocytes and female courtship behavior, including their postmating changes. Regulates female meiosis by controlling calcineurin activity in the germline. Has a role in calcium signaling during egg activation; bcd mRNA polyadenylation and translation in the oocyte. The polypeptide is Protein sarah (sra) (Drosophila melanogaster (Fruit fly)).